Reading from the N-terminus, the 208-residue chain is Large ribosomal subunit protein uL3 (208 aa).

A disordered region spans residues 126 to 150 (NQSRGPMAHGSRYHRRPGSMGPVAP).

Belongs to the universal ribosomal protein uL3 family. In terms of assembly, part of the 50S ribosomal subunit. Forms a cluster with proteins L14 and L19.

Functionally, one of the primary rRNA binding proteins, it binds directly near the 3'-end of the 23S rRNA, where it nucleates assembly of the 50S subunit. This Exiguobacterium sibiricum (strain DSM 17290 / CCUG 55495 / CIP 109462 / JCM 13490 / 255-15) protein is Large ribosomal subunit protein uL3.